The primary structure comprises 369 residues: Aminomethyltransferase (369 aa).

It belongs to the GcvT family. As to quaternary structure, the glycine cleavage system is composed of four proteins: P, T, L and H.

The catalysed reaction is N(6)-[(R)-S(8)-aminomethyldihydrolipoyl]-L-lysyl-[protein] + (6S)-5,6,7,8-tetrahydrofolate = N(6)-[(R)-dihydrolipoyl]-L-lysyl-[protein] + (6R)-5,10-methylene-5,6,7,8-tetrahydrofolate + NH4(+). Functionally, the glycine cleavage system catalyzes the degradation of glycine. The chain is Aminomethyltransferase from Xanthomonas oryzae pv. oryzae (strain PXO99A).